The following is a 414-amino-acid chain: Collagenase (414 aa).

It belongs to the peptidase U32 family. As to quaternary structure, homodimer. It depends on a metal cation as a cofactor.

In terms of biological role, has collagenase activity. Hydrolyzes type I collagen. May play a role in virulence. This chain is Collagenase (prtC), found in Porphyromonas gingivalis (strain ATCC BAA-308 / W83).